We begin with the raw amino-acid sequence, 138 residues long: U1 small nuclear ribonucleoprotein C (138 aa).

A Matrin-type zinc finger spans residues 4–36 (FYCDYCDTYLTHDSPSVRKTHCSGRKHKENVRD). Phosphotyrosine is present on Y8. S17 is modified (phosphoserine). N6-acetyllysine is present on K52. Residues 62-99 (IPPNLFSAPPLGGPMIPPPHPSMMGPPPPGMMPVGPPP) are disordered. The span at 72-99 (LGGPMIPPPHPSMMGPPPPGMMPVGPPP) shows a compositional bias: pro residues.

Belongs to the U1 small nuclear ribonucleoprotein C family. As to quaternary structure, component of the U1 snRNP. The U1 snRNP is composed of the U1 snRNA and the 7 core Sm proteins SNRPB, SNRPD1, SNRPD2, SNRPD3, SNRPE, SNRPF and SNRPG that assemble in a heptameric protein ring on the Sm site of the small nuclear RNA to form the core snRNP, and at least 3 U1 snRNP-specific proteins SNRNP70/U1-70K, SNRPA/U1-A and SNRPC/U1-C. SNRPC/U1-C interacts with U1 snRNA and the 5' splice-site region of the pre-mRNA. Interacts (via N-terminus) with TIA1 (via C-terminus); thereby promoting spliceosomal U1 snRNP recruitment to 5' splice sites.

It localises to the nucleus. Functionally, component of the spliceosomal U1 snRNP, which is essential for recognition of the pre-mRNA 5' splice-site and the subsequent assembly of the spliceosome. SNRPC/U1-C is directly involved in initial 5' splice-site recognition for both constitutive and regulated alternative splicing. The interaction with the 5' splice-site seems to precede base-pairing between the pre-mRNA and the U1 snRNA. Stimulates commitment or early (E) complex formation by stabilizing the base pairing of the 5' end of the U1 snRNA and the 5' splice-site region. This Monodelphis domestica (Gray short-tailed opossum) protein is U1 small nuclear ribonucleoprotein C.